The chain runs to 1336 residues: Adhesion G protein-coupled receptor A2 (1336 aa).

The first 33 residues, Met-1 to Gly-33, serve as a signal peptide directing secretion. Topologically, residues Ala-34–Pro-769 are extracellular. Residues Asn-84 and Asn-101 are each glycosylated (N-linked (GlcNAc...) asparagine). LRR repeat units lie at residues Gly-85–Gly-106, Leu-109–Gly-130, Glu-133–Gly-154, and Arg-157–Glu-178. Asn-162 carries N-linked (GlcNAc...) asparagine glycosylation. An LRRCT domain is found at Glu-190–Gly-241. One can recognise an Ig-like domain in the interval Thr-247–Val-344. An intrachain disulfide couples Cys-268 to Cys-328. Asn-275 carries N-linked (GlcNAc...) asparagine glycosylation. The RGD motif lies at Arg-362–Asp-364. Residues Phe-594 to Pro-757 enclose the GAIN-B domain. 3 N-linked (GlcNAc...) asparagine glycosylation sites follow: Asn-602, Asn-691, and Asn-735. Positions Ala-711–Pro-757 are GPS. A disulfide bridge connects residues Cys-727 and Cys-741. Residues Val-770–Ile-790 traverse the membrane as a helical segment. The Cytoplasmic portion of the chain corresponds to Leu-791 to Met-805. The chain crosses the membrane as a helical span at residues Leu-806–Leu-826. Residues Thr-827 to Gln-830 are Extracellular-facing. Residues Met-831–Met-851 traverse the membrane as a helical segment. Topologically, residues Gly-852–Arg-884 are cytoplasmic. Residues Phe-885 to Ile-905 form a helical membrane-spanning segment. Over His-906 to Ser-922 the chain is Extracellular. Residues Leu-923 to Cys-943 traverse the membrane as a helical segment. Residues Ala-944–Leu-1016 lie on the Cytoplasmic side of the membrane. A helical membrane pass occupies residues Gly-1017–Val-1037. Residues Ser-1038–Arg-1044 lie on the Extracellular side of the membrane. Residues Val-1045–His-1065 traverse the membrane as a helical segment. Over His-1066–Val-1336 the chain is Cytoplasmic. The segment covering Ala-1084–Ala-1095 has biased composition (low complexity). The segment at Ala-1084 to Glu-1310 is disordered. At Ser-1104 the chain carries Phosphoserine. Positions Gly-1110–Arg-1124 are enriched in low complexity. Residues Thr-1133 to Cys-1143 show a composition bias toward polar residues. Residues Pro-1166–His-1186 are compositionally biased toward basic residues. Residues Ser-1213–Ser-1234 show a composition bias toward polar residues. A PDZ-binding motif is present at residues Glu-1333–Val-1336.

Belongs to the G-protein coupled receptor 2 family. Adhesion G-protein coupled receptor (ADGR) subfamily. As to quaternary structure, interacts with RECK; the interaction is direct. Interacts (via PDZ-binding motif) with DLG1 (via PDZ domains). The cleaved extracellular subunit interacts with the integrin heterodimer ITGAV:ITGB3. Post-translationally, glycosylated. Proteolytically cleaved into two subunits, an extracellular subunit and a seven-transmembrane subunit. Cleaved by thrombin (F2) and MMP1. Also cleaved by MMP9, with lower efficiency. Presence of the protein disulfide-isomerase P4HB at the cell surface is additionally required for shedding of the extracellular subunit, suggesting that the subunits are linked by disulfide bonds. Shedding is enhanced by the growth factor FGF2 and may promote cell survival during angiogenesis. As to expression, abundantly expressed in the vasculature of the developing embryo. Expression in normal adult tissues is specifically vascular with endothelial expression in CNS, including brain and retina and more widespread pericyte expression in the brain and organs, including the kidney, pancreas and corpus luteum.

Its subcellular location is the cell membrane. The protein localises to the cell projection. It is found in the filopodium. Its function is as follows. Endothelial receptor which functions together with RECK to enable brain endothelial cells to selectively respond to Wnt7 signals (WNT7A or WNT7B). Plays a key role in Wnt7-specific responses, such as endothelial cell sprouting and migration in the forebrain and neural tube, and establishment of the blood-brain barrier. Acts as a Wnt7-specific coactivator of canonical Wnt signaling: required to deliver RECK-bound Wnt7 to frizzled by assembling a higher-order RECK-ADGRA2-Fzd-LRP5-LRP6 complex. ADGRA2-tethering function does not rely on its G-protein coupled receptor (GPCR) structure but instead on its combined capacity to interact with RECK extracellularly and recruit the Dishevelled scaffolding protein intracellularly. Binds to the glycosaminoglycans heparin, heparin sulfate, chondroitin sulfate and dermatan sulfate. The polypeptide is Adhesion G protein-coupled receptor A2 (Mus musculus (Mouse)).